The chain runs to 538 residues: Probable ribonuclease 3 (538 aa).

2 consecutive RNase III domains span residues 24-149 (IKSY…LNFG) and 238-381 (ASQM…EGYL). A DRBM domain is found at 408-477 (LISQNIEVLH…NYKDLILQLY (70 aa)).

The protein belongs to the ribonuclease III family.

The enzyme catalyses Endonucleolytic cleavage to 5'-phosphomonoester.. Digests double-stranded RNA. In Acanthamoeba polyphaga (Amoeba), this protein is Probable ribonuclease 3.